A 780-amino-acid chain; its full sequence is Reticulon-1 (780 aa).

Disordered regions lie at residues 1-76 (MAAP…VAME), 128-176 (QKEN…AEST), 201-223 (RPQE…LDFK), and 293-576 (MTAT…IPGP). A phosphoserine mark is found at Ser-13 and Ser-70. Ser-327 is subject to Phosphoserine. Low complexity predominate over residues 328–341 (PGSVTPPSSGTEPS). Phosphoserine is present on residues Ser-350, Ser-352, and Ser-487. A compositionally biased stretch (basic and acidic residues) spans 497–512 (AIREETGSRATEERAP). One can recognise a Reticulon domain in the interval 593–780 (AIDLLYWRDI…KIPGAKRHAE (188 aa)). A run of 2 helical transmembrane segments spans residues 607 to 627 (IVFG…VVSV) and 709 to 729 (FAVL…LTLL).

As to quaternary structure, interacts with NDRG1. Interacts with BACE1. Interacts with TMEM33.

It is found in the endoplasmic reticulum membrane. Its subcellular location is the golgi apparatus membrane. Inhibits amyloid precursor protein processing, probably by blocking BACE1 activity. The chain is Reticulon-1 (Rtn1) from Mus musculus (Mouse).